The sequence spans 440 residues: Phosphoglycerate kinase, glycosomal (440 aa).

Residues valine 23, aspartate 24, phenylalanine 25, asparagine 26, arginine 39, serine 61, histidine 62, glycine 64, arginine 65, arginine 135, histidine 171, and arginine 172 each coordinate (2R)-3-phosphoglycerate. CDP is bound at residue glycine 217. Alanine 218 contributes to the ADP binding site. AMP contacts are provided by alanine 218 and lysine 219. Alanine 218 is a binding site for ATP. Residue alanine 218 coordinates Mg(2+). A (2R)-3-phosphoglycerate-binding site is contributed by lysine 219. Residue aspartate 222 participates in CDP binding. Aspartate 222 contacts Mg(2+). Lysine 223 and glycine 241 together coordinate ADP. Lysine 223 is an AMP binding site. Residue glycine 241 coordinates CDP. 2 residues coordinate AMP: alanine 242 and alanine 314. 2 residues coordinate ATP: alanine 242 and alanine 314. The ADP site is built by alanine 314 and asparagine 338. CDP contacts are provided by glycine 339 and phenylalanine 344. ADP is bound by residues phenylalanine 344, glutamate 345, aspartate 377, and serine 378. Position 345 (glutamate 345) interacts with AMP. ATP is bound by residues aspartate 377 and serine 378. Aspartate 377 contributes to the Mg(2+) binding site.

Belongs to the phosphoglycerate kinase family. In terms of assembly, monomer. Requires Mg(2+) as cofactor.

The protein resides in the glycosome. It carries out the reaction (2R)-3-phosphoglycerate + ATP = (2R)-3-phospho-glyceroyl phosphate + ADP. The protein operates within carbohydrate degradation; glycolysis; pyruvate from D-glyceraldehyde 3-phosphate: step 2/5. This Trypanosoma brucei brucei protein is Phosphoglycerate kinase, glycosomal.